An 804-amino-acid chain; its full sequence is DNA mismatch repair protein MutS (804 aa).

Residue 614–621 (GPNMAGKS) coordinates ATP.

It belongs to the DNA mismatch repair MutS family.

In terms of biological role, this protein is involved in the repair of mismatches in DNA. It is possible that it carries out the mismatch recognition step. This protein has a weak ATPase activity. This chain is DNA mismatch repair protein MutS, found in Ehrlichia ruminantium (strain Welgevonden).